A 360-amino-acid chain; its full sequence is UDP-N-acetylglucosamine--N-acetylmuramyl-(pentapeptide) pyrophosphoryl-undecaprenol N-acetylglucosamine transferase (360 aa).

Residues 17-19 (TAG), asparagine 130, arginine 166, serine 200, isoleucine 247, and glutamine 291 each bind UDP-N-acetyl-alpha-D-glucosamine.

This sequence belongs to the glycosyltransferase 28 family. MurG subfamily.

It localises to the cell membrane. It carries out the reaction di-trans,octa-cis-undecaprenyl diphospho-N-acetyl-alpha-D-muramoyl-L-alanyl-D-glutamyl-meso-2,6-diaminopimeloyl-D-alanyl-D-alanine + UDP-N-acetyl-alpha-D-glucosamine = di-trans,octa-cis-undecaprenyl diphospho-[N-acetyl-alpha-D-glucosaminyl-(1-&gt;4)]-N-acetyl-alpha-D-muramoyl-L-alanyl-D-glutamyl-meso-2,6-diaminopimeloyl-D-alanyl-D-alanine + UDP + H(+). It participates in cell wall biogenesis; peptidoglycan biosynthesis. Cell wall formation. Catalyzes the transfer of a GlcNAc subunit on undecaprenyl-pyrophosphoryl-MurNAc-pentapeptide (lipid intermediate I) to form undecaprenyl-pyrophosphoryl-MurNAc-(pentapeptide)GlcNAc (lipid intermediate II). This Corynebacterium efficiens (strain DSM 44549 / YS-314 / AJ 12310 / JCM 11189 / NBRC 100395) protein is UDP-N-acetylglucosamine--N-acetylmuramyl-(pentapeptide) pyrophosphoryl-undecaprenol N-acetylglucosamine transferase.